The sequence spans 87 residues: Phosphoribosyl-ATP pyrophosphatase (87 aa).

It belongs to the PRA-PH family.

The protein localises to the cytoplasm. The enzyme catalyses 1-(5-phospho-beta-D-ribosyl)-ATP + H2O = 1-(5-phospho-beta-D-ribosyl)-5'-AMP + diphosphate + H(+). The protein operates within amino-acid biosynthesis; L-histidine biosynthesis; L-histidine from 5-phospho-alpha-D-ribose 1-diphosphate: step 2/9. The protein is Phosphoribosyl-ATP pyrophosphatase of Bifidobacterium longum (strain DJO10A).